We begin with the raw amino-acid sequence, 558 residues long: Dihydroxy-acid dehydratase (558 aa).

Cysteine 50 serves as a coordination point for [2Fe-2S] cluster. Aspartate 82 lines the Mg(2+) pocket. [2Fe-2S] cluster is bound at residue cysteine 123. Mg(2+) contacts are provided by aspartate 124 and lysine 125. Residue lysine 125 is modified to N6-carboxylysine. [2Fe-2S] cluster is bound at residue cysteine 195. Residue glutamate 447 participates in Mg(2+) binding. The active-site Proton acceptor is serine 472.

It belongs to the IlvD/Edd family. Homodimer. Requires [2Fe-2S] cluster as cofactor. It depends on Mg(2+) as a cofactor.

It carries out the reaction (2R)-2,3-dihydroxy-3-methylbutanoate = 3-methyl-2-oxobutanoate + H2O. The enzyme catalyses (2R,3R)-2,3-dihydroxy-3-methylpentanoate = (S)-3-methyl-2-oxopentanoate + H2O. It functions in the pathway amino-acid biosynthesis; L-isoleucine biosynthesis; L-isoleucine from 2-oxobutanoate: step 3/4. The protein operates within amino-acid biosynthesis; L-valine biosynthesis; L-valine from pyruvate: step 3/4. Its function is as follows. Functions in the biosynthesis of branched-chain amino acids. Catalyzes the dehydration of (2R,3R)-2,3-dihydroxy-3-methylpentanoate (2,3-dihydroxy-3-methylvalerate) into 2-oxo-3-methylpentanoate (2-oxo-3-methylvalerate) and of (2R)-2,3-dihydroxy-3-methylbutanoate (2,3-dihydroxyisovalerate) into 2-oxo-3-methylbutanoate (2-oxoisovalerate), the penultimate precursor to L-isoleucine and L-valine, respectively. The protein is Dihydroxy-acid dehydratase of Saccharolobus islandicus (strain Y.N.15.51 / Yellowstone #2) (Sulfolobus islandicus).